The following is a 94-amino-acid chain: MICOS complex subunit MIC12 (94 aa).

A helical membrane pass occupies residues tyrosine 7–tyrosine 23.

This sequence belongs to the MICOS complex subunit Mic12 family. As to quaternary structure, component of the mitochondrial contact site and cristae organizing system (MICOS) complex.

It localises to the mitochondrion inner membrane. Functionally, component of the MICOS complex, a large protein complex of the mitochondrial inner membrane that plays crucial roles in the maintenance of crista junctions, inner membrane architecture, and formation of contact sites to the outer membrane. The chain is MICOS complex subunit MIC12 (AIM5) from Eremothecium gossypii (strain ATCC 10895 / CBS 109.51 / FGSC 9923 / NRRL Y-1056) (Yeast).